The sequence spans 412 residues: Multifunctional CCA protein (412 aa).

Glycine 8 and arginine 11 together coordinate ATP. Positions 8 and 11 each coordinate CTP. Mg(2+) contacts are provided by glutamate 21 and aspartate 23. Positions 91, 137, and 140 each coordinate ATP. The CTP site is built by arginine 91, arginine 137, and arginine 140. An HD domain is found at 228-329; the sequence is TGIHTLMTLA…LKLFNAIDVW (102 aa).

Belongs to the tRNA nucleotidyltransferase/poly(A) polymerase family. Bacterial CCA-adding enzyme type 1 subfamily. In terms of assembly, monomer. Can also form homodimers and oligomers. Mg(2+) is required as a cofactor. The cofactor is Ni(2+).

It catalyses the reaction a tRNA precursor + 2 CTP + ATP = a tRNA with a 3' CCA end + 3 diphosphate. It carries out the reaction a tRNA with a 3' CCA end + 2 CTP + ATP = a tRNA with a 3' CCACCA end + 3 diphosphate. In terms of biological role, catalyzes the addition and repair of the essential 3'-terminal CCA sequence in tRNAs without using a nucleic acid template. Adds these three nucleotides in the order of C, C, and A to the tRNA nucleotide-73, using CTP and ATP as substrates and producing inorganic pyrophosphate. tRNA 3'-terminal CCA addition is required both for tRNA processing and repair. Also involved in tRNA surveillance by mediating tandem CCA addition to generate a CCACCA at the 3' terminus of unstable tRNAs. While stable tRNAs receive only 3'-terminal CCA, unstable tRNAs are marked with CCACCA and rapidly degraded. This is Multifunctional CCA protein from Yersinia pseudotuberculosis serotype I (strain IP32953).